The sequence spans 285 residues: Nucleotide-binding protein Psyr_4150 (285 aa).

8–15 (GRSGSGKS) lines the ATP pocket. 60 to 63 (DARN) lines the GTP pocket.

The protein belongs to the RapZ-like family.

In terms of biological role, displays ATPase and GTPase activities. This chain is Nucleotide-binding protein Psyr_4150, found in Pseudomonas syringae pv. syringae (strain B728a).